A 1681-amino-acid polypeptide reads, in one-letter code: Meiosis regulator and mRNA stability factor 1 (1681 aa).

Positions Ile-340–Ile-477 constitute an NYN domain. 2 disordered regions span residues Val-576–Val-595 and Gln-638–Phe-717. Residues Gln-638–Ser-647 show a composition bias toward polar residues. The span at Gln-648–Asp-658 shows a compositional bias: basic and acidic residues. A compositionally biased stretch (polar residues) spans Lys-659–Ser-690. Positions Gln-692–Val-715 are enriched in basic and acidic residues. Residues Ala-779–Gly-858 form the RRM domain. 8 HTH OST-type domains span residues Ser-863–Gly-937, Ser-991–Pro-1067, Gln-1087–Arg-1161, Gln-1163–Arg-1238, Arg-1247–Met-1321, Arg-1323–Lys-1398, Ser-1399–Leu-1472, and Ser-1474–Asp-1548. A compositionally biased stretch (polar residues) spans Glu-1637 to Ser-1648. Positions Glu-1637–Gln-1662 are disordered. Residues Lys-1649–Val-1659 are compositionally biased toward basic and acidic residues.

It localises to the peroxisome. Essential regulator of oogenesis required for female meiotic progression to repress transposable elements and preventing their mobilization, which is essential for the germline integrity. This Xenopus tropicalis (Western clawed frog) protein is Meiosis regulator and mRNA stability factor 1.